A 323-amino-acid polypeptide reads, in one-letter code: Germacrene A synthase (323 aa).

Positions 82, 86, 222, 226, and 230 each coordinate Mg(2+). The DDXXD motif signature appears at 82-86; sequence DDQCD.

Belongs to the terpene synthase family. It depends on Mg(2+) as a cofactor.

The catalysed reaction is (2E,6E)-farnesyl diphosphate = 5-epi-alpha-selinene + diphosphate. Catalyzes the cyclization of farnesyl diphosphate (FPP) to the sesquiterpene germacrene A. This Nostoc punctiforme (strain ATCC 29133 / PCC 73102) protein is Germacrene A synthase.